The following is a 1193-amino-acid chain: Protein diaphanous homolog 3 (1193 aa).

Residues 1–10 show a composition bias toward basic residues; that stretch reads MERHQPRLHH. The tract at residues 1 to 57 is disordered; that stretch reads MERHQPRLHHPAQGSAAGTPYPSSASLRGCRESKMPRRKGPQHPPPPSGPEEPGEKR. Phosphoserine is present on Ser26. The short motif at 36 to 60 is the Nuclear localization signal element; that stretch reads PRRKGPQHPPPPSGPEEPGEKRPKF. Position 68 is a phosphothreonine (Thr68). Phosphoserine occurs at positions 77 and 175. A GBD/FH3 domain is found at 114–476; the sequence is PKPLSENELL…QIVLHRDGMD (363 aa). The stretch at 497-554 forms a coiled coil; sequence IDQAKLEEFEEKASELYKKFEKEFTDHQETQAELQKKEAKINELQAELQAFKSQFGAL. The tract at residues 558-622 is disordered; it reads CNIPLPPSKE…PPPLGFLGGQ (65 aa). The FH1 domain maps to 561 to 631; that stretch reads PLPPSKEGGT…QNSPPLPILP (71 aa). The span at 575 to 600 shows a compositional bias: pro residues; sequence LPPPPPLPSGGGVPPPPPPPPPPPLP. Residue Ser624 is modified to Phosphoserine. The FH2 domain occupies 636-1034; sequence PKKEFKPEIS…EKRVRIAKEL (399 aa). Positions 1013–1056 form a coiled coil; the sequence is KENIKKREAEEKEKRVRIAKELAERERLERQQKKKRLLEMKTEG. Residues 1057–1087 form the DAD domain; that stretch reads DETGVMDNLLEALQSGAAFRDRRKRTPMPKD. A phosphoserine mark is found at Ser1093 and Ser1179. Positions 1184-1193 match the Nuclear export signal motif; sequence EALLARLRAL.

This sequence belongs to the formin homology family. Diaphanous subfamily. In terms of processing, ubiquitinated.

The protein localises to the cytoplasm. It localises to the nucleus. Its function is as follows. Actin nucleation and elongation factor required for the assembly of F-actin structures, such as actin cables and stress fibers. Required for cytokinesis, stress fiber formation and transcriptional activation of the serum response factor. Binds to GTP-bound form of Rho and to profilin: acts in a Rho-dependent manner to recruit profilin to the membrane, where it promotes actin polymerization. DFR proteins couple Rho and Src tyrosine kinase during signaling and the regulation of actin dynamics. Also acts as an actin nucleation and elongation factor in the nucleus by promoting nuclear actin polymerization inside the nucleus to drive serum-dependent SRF-MRTFA activity. The protein is Protein diaphanous homolog 3 (DIAPH3) of Homo sapiens (Human).